A 273-amino-acid polypeptide reads, in one-letter code: Ribosomal RNA small subunit methyltransferase A (273 aa).

6 residues coordinate S-adenosyl-L-methionine: Asn-18, Leu-20, Gly-45, Glu-66, Asp-91, and Asn-113.

The protein belongs to the class I-like SAM-binding methyltransferase superfamily. rRNA adenine N(6)-methyltransferase family. RsmA subfamily.

It localises to the cytoplasm. The catalysed reaction is adenosine(1518)/adenosine(1519) in 16S rRNA + 4 S-adenosyl-L-methionine = N(6)-dimethyladenosine(1518)/N(6)-dimethyladenosine(1519) in 16S rRNA + 4 S-adenosyl-L-homocysteine + 4 H(+). Its function is as follows. Specifically dimethylates two adjacent adenosines (A1518 and A1519) in the loop of a conserved hairpin near the 3'-end of 16S rRNA in the 30S particle. May play a critical role in biogenesis of 30S subunits. This Cronobacter sakazakii (strain ATCC BAA-894) (Enterobacter sakazakii) protein is Ribosomal RNA small subunit methyltransferase A.